Consider the following 478-residue polypeptide: Pyrrolysine--tRNA ligase (478 aa).

Residues 106-188 form a disordered region; it reads VMPKSVARTP…TSAMPASTSA (83 aa). Residues 122–132 show a composition bias toward polar residues; the sequence is APVQTLPSESQ. The segment covering 133-188 has biased composition (low complexity); that stretch reads PAPTTPISASTTAPASTSTTAPAPASTTAPAPASTTAPASASTTISTSAMPASTSA.

Belongs to the class-II aminoacyl-tRNA synthetase family.

The protein localises to the cytoplasm. It carries out the reaction tRNA(Pyl) + L-pyrrolysine + ATP = L-pyrrolysyl-tRNA(Pyl) + AMP + diphosphate. Functionally, catalyzes the attachment of pyrrolysine to tRNA(Pyl). Pyrrolysine is a lysine derivative encoded by the termination codon UAG. This is Pyrrolysine--tRNA ligase from Methanosarcina thermophila.